The primary structure comprises 94 residues: Evasin P1086 (94 aa).

An N-terminal signal peptide occupies residues 1-28 (MAFNVITFLQLAVFVVILFNINLHSASA). Intrachain disulfides connect Cys48–Cys67, Cys52–Cys69, and Cys63–Cys80. Asn74 carries N-linked (GlcNAc...) asparagine glycosylation.

The protein resides in the secreted. Its function is as follows. Salivary chemokine-binding protein which binds to host chemokines CXCL1, CXCL2, CXCL3, CXCL5, CXCL6, CXCL10, CXCL12 and CXCL13. The protein is Evasin P1086 of Ixodes ricinus (Common tick).